A 59-amino-acid polypeptide reads, in one-letter code: UPF0181 protein YoaH (59 aa).

This sequence belongs to the UPF0181 family.

This chain is UPF0181 protein YoaH, found in Escherichia coli O127:H6 (strain E2348/69 / EPEC).